Reading from the N-terminus, the 310-residue chain is Small ribosomal subunit biogenesis GTPase RsgA (310 aa).

Positions 77-236 constitute a CP-type G domain; it reads KNELKRPNIA…IADTPGFSKL (160 aa). Residues 126–129 and 179–187 each bind GTP; these read SKID and GQTGVGKST. Cysteine 260, cysteine 266, histidine 268, and cysteine 274 together coordinate Zn(2+).

It belongs to the TRAFAC class YlqF/YawG GTPase family. RsgA subfamily. Monomer. Associates with 30S ribosomal subunit, binds 16S rRNA. It depends on Zn(2+) as a cofactor.

It is found in the cytoplasm. One of several proteins that assist in the late maturation steps of the functional core of the 30S ribosomal subunit. Helps release RbfA from mature subunits. May play a role in the assembly of ribosomal proteins into the subunit. Circularly permuted GTPase that catalyzes slow GTP hydrolysis, GTPase activity is stimulated by the 30S ribosomal subunit. This is Small ribosomal subunit biogenesis GTPase RsgA from Phytoplasma australiense.